Consider the following 1323-residue polypeptide: DNA-directed RNA polymerase subunit beta' (1323 aa).

Zn(2+)-binding residues include Cys-60, Cys-62, Cys-75, and Cys-78. 3 residues coordinate Mg(2+): Asp-535, Asp-537, and Asp-539. Residues Cys-894, Cys-977, Cys-984, and Cys-987 each coordinate Zn(2+).

The protein belongs to the RNA polymerase beta' chain family. The RNAP catalytic core consists of 2 alpha, 1 beta, 1 beta' and 1 omega subunit. When a sigma factor is associated with the core the holoenzyme is formed, which can initiate transcription. The cofactor is Mg(2+). Zn(2+) is required as a cofactor.

It catalyses the reaction RNA(n) + a ribonucleoside 5'-triphosphate = RNA(n+1) + diphosphate. DNA-dependent RNA polymerase catalyzes the transcription of DNA into RNA using the four ribonucleoside triphosphates as substrates. This chain is DNA-directed RNA polymerase subunit beta', found in Corynebacterium urealyticum (strain ATCC 43042 / DSM 7109).